A 556-amino-acid polypeptide reads, in one-letter code: SKA complex subunit 3 (556 aa).

Residues 105–135 (PLCNDNSENEQTQESEKPKDNDVSPRKADAE) are disordered. The span at 118 to 134 (ESEKPKDNDVSPRKADA) shows a compositional bias: basic and acidic residues.

It belongs to the SKA3 family. As to quaternary structure, component of the SKA complex, composed of ska1, ska2 and ska3.

The protein localises to the cytoplasm. It localises to the cytoskeleton. It is found in the spindle. The protein resides in the chromosome. Its subcellular location is the centromere. The protein localises to the kinetochore. Component of the SKA complex, a microtubule plus end-binding complex of the outer kinetochore that stabilizes spindle microtubule-kinetochore attachments, promotes alignment of chromosomes at the mitotic spindle equator (chromosome congression) and assists suppression of the spindle assembly checkpoint. Kinetochores, consisting of a centromere-associated inner segment and a microtubule-contacting outer segment, play a crucial role in chromosome segregation by mediating the physical connection between centromeric DNA and spindle microtubules. The outer kinetochore is made up of the ten-subunit KMN network complex, comprising the MIS12, NDC80 and KNL1 complexes, and auxiliary microtubule-associated components such as the SKA complex; together they connect the outer kinetochore with the inner kinetochore, bind microtubules, and mediate interactions with mitotic checkpoint proteins that delay anaphase until chromosomes are bioriented on the spindle. The SKA complex is loaded onto bioriented kinetochores and it facilitates chromosome congression by stabilizing microtubules, and end-on attachment of the NDC80 complex to depolymerizing spindle microtubules, thereby assisting the poleward-moving kinetochore in withstanding microtubule pulling forces. The complex associates with dynamic microtubule plus-ends and can track both depolymerizing and elongating microtubules. The complex recruits protein phosphatase 1 (PP1) to the kinetochore in prometaphase and metaphase, to oppose spindle assembly checkpoint signaling and promote the onset of anaphase. Within the complex, binds microtubules but with a much lower affinity than SKA1. During meiosis the SKA complex stabilizes the meiotic spindle and is required for its migration to the cortex. The chain is SKA complex subunit 3 (ska3) from Xenopus laevis (African clawed frog).